Consider the following 137-residue polypeptide: Regulator of cell cycle RGCC (137 aa).

The segment at 57-116 (LERMKRRSSASVSDSSGFSDSESADSVYRDSFTFSDEKLNSPTNSSPALLPSAVTPRKAK) is disordered. Over residues 65 to 82 (SASVSDSSGFSDSESADS) the composition is skewed to low complexity. Residues Ser67, Ser69, Ser71, Ser75, Ser91, and Ser97 each carry the phosphoserine modification. The residue at position 111 (Thr111) is a Phosphothreonine.

In terms of assembly, interacts with CDK1 and PLK1. Interacts with SMAD3.

The protein localises to the cytoplasm. It is found in the nucleus. The protein resides in the cytoskeleton. Its subcellular location is the microtubule organizing center. It localises to the centrosome. In terms of biological role, modulates the activity of cell cycle-specific kinases. Enhances CDK1 activity. May contribute to the regulation of the cell cycle. May inhibit growth of glioma cells by promoting arrest of mitotic progression at the G2/M transition. Fibrogenic factor contributing to the pathogenesis of renal fibrosis through fibroblast activation. This is Regulator of cell cycle RGCC (Rgcc) from Mus musculus (Mouse).